The following is a 326-amino-acid chain: MSNGYGDHMDDVCRDDIGRTNLIVNYLPQNMTQDELRSLFSSIGEVESAKLIRDKVAGHSLGYGFVNYLNAKDAERAINTLNGLRLQSKTIKVSVARPSSESIKDANLYISGLPRTMTQKDVEDMFLPFGRIINSRVLVDQATGLSRGVAFIRFDKRSEAEEAIASFNGHKPPGSSEPITVKFAANPNQNKNMALLSQLCHSPARRFGGPVHHQAQRFRFSPMGVDHMSSISGVNVASSASSGWCIFIYNLGQDADEGILWQMFGPFGAVTNVKVIRDFNTNKCKGFGFVTMTNYEEAAMAIASLNGYRLGDKTLQVFFKTSKSHK.

3 consecutive RRM domains span residues 20-98, 106-186, and 244-322; these read TNLI…VARP, ANLY…FAAN, and WCIF…FKTS.

It belongs to the RRM elav family. As to quaternary structure, interacts (via RRM3) with cirbp. Unable to form oligomers. Part of a ribonucleoprotein (RNP) complex, at least composed of elavl1/elrA and/or elavl2/elrB, igf2bp3/vg1RBP, ddx6/Xp54, ybx2/frgy2, lsm14b/rap55b and, in a subset of RNP complexes, stau1/staufen.

Its subcellular location is the cytoplasm. The protein localises to the cell cortex. In terms of biological role, RNA-binding protein that binds to the 3'-UTR region of mRNAs and increases their stability. Involved in embryonic stem cells (ESCs) differentiation: preferentially binds mRNAs that are not methylated by N6-methyladenosine (m6A), stabilizing them, promoting ESCs differentiation. Binds to poly-U elements and AU-rich elements (AREs) in the 3'-UTR of target mRNAs. Acts cooperatively with cribp to stabilize AU-rich sequence (ARE)-containing mRNAs. May play a role during gastrulation. Required for the vegetal localization of vg1 mRNA. The sequence is that of ELAV-like protein 1 from Xenopus tropicalis (Western clawed frog).